The primary structure comprises 532 residues: Membrane protein insertase YidC (532 aa).

The next 5 helical transmembrane spans lie at phenylalanine 7–methionine 27, leucine 336–isoleucine 356, glycine 413–isoleucine 433, leucine 450–isoleucine 470, and proline 492–isoleucine 512.

It belongs to the OXA1/ALB3/YidC family. Type 1 subfamily. Interacts with the Sec translocase complex via SecD. Specifically interacts with transmembrane segments of nascent integral membrane proteins during membrane integration.

Its subcellular location is the cell membrane. Its function is as follows. Required for the insertion and/or proper folding and/or complex formation of integral membrane proteins into the membrane. Involved in integration of membrane proteins that insert both dependently and independently of the Sec translocase complex, as well as at least some lipoproteins. Aids folding of multispanning membrane proteins. This chain is Membrane protein insertase YidC, found in Buchnera aphidicola subsp. Acyrthosiphon pisum (strain APS) (Acyrthosiphon pisum symbiotic bacterium).